A 73-amino-acid polypeptide reads, in one-letter code: Translation initiation factor IF-1 3 (73 aa).

Residues M1–K72 enclose the S1-like domain.

Belongs to the IF-1 family. As to quaternary structure, component of the 30S ribosomal translation pre-initiation complex which assembles on the 30S ribosome in the order IF-2 and IF-3, IF-1 and N-formylmethionyl-tRNA(fMet); mRNA recruitment can occur at any time during PIC assembly.

The protein resides in the cytoplasm. Functionally, one of the essential components for the initiation of protein synthesis. Stabilizes the binding of IF-2 and IF-3 on the 30S subunit to which N-formylmethionyl-tRNA(fMet) subsequently binds. Helps modulate mRNA selection, yielding the 30S pre-initiation complex (PIC). Upon addition of the 50S ribosomal subunit IF-1, IF-2 and IF-3 are released leaving the mature 70S translation initiation complex. This is Translation initiation factor IF-1 3 from Cupriavidus pinatubonensis (strain JMP 134 / LMG 1197) (Cupriavidus necator (strain JMP 134)).